We begin with the raw amino-acid sequence, 102 residues long: Small ribosomal subunit protein uS10 (102 aa).

The protein belongs to the universal ribosomal protein uS10 family. As to quaternary structure, part of the 30S ribosomal subunit.

Its function is as follows. Involved in the binding of tRNA to the ribosomes. This is Small ribosomal subunit protein uS10 from Nitrosopumilus maritimus (strain SCM1).